The following is a 215-amino-acid chain: Urease accessory protein UreG (215 aa).

Positions 1–21 are disordered; it reads MNAPAPSSARRTKKLPPLRVG. 24-31 serves as a coordination point for GTP; the sequence is GPVGSGKT.

The protein belongs to the SIMIBI class G3E GTPase family. UreG subfamily. Homodimer. UreD, UreF and UreG form a complex that acts as a GTP-hydrolysis-dependent molecular chaperone, activating the urease apoprotein by helping to assemble the nickel containing metallocenter of UreC. The UreE protein probably delivers the nickel.

It localises to the cytoplasm. Its function is as follows. Facilitates the functional incorporation of the urease nickel metallocenter. This process requires GTP hydrolysis, probably effectuated by UreG. This Burkholderia lata (strain ATCC 17760 / DSM 23089 / LMG 22485 / NCIMB 9086 / R18194 / 383) protein is Urease accessory protein UreG.